A 61-amino-acid chain; its full sequence is UPF0370 protein Spro_3503 (61 aa).

The helical transmembrane segment at 3–23 threads the bilayer; it reads WLADYWWIILLILVGMIISGI. The segment covering 38-48 has biased composition (basic and acidic residues); that stretch reads KPELPPHRDNN. The segment at 38–61 is disordered; that stretch reads KPELPPHRDNNAEWDDDDDWPKKK. Residues 49–61 show a composition bias toward acidic residues; that stretch reads AEWDDDDDWPKKK.

Belongs to the UPF0370 family.

The protein localises to the cell membrane. The sequence is that of UPF0370 protein Spro_3503 from Serratia proteamaculans (strain 568).